A 312-amino-acid chain; its full sequence is HPr kinase/phosphorylase (312 aa).

Active-site residues include H139 and K160. Position 154–161 (154–161 (GSSGVGKS)) interacts with ATP. S161 is a binding site for Mg(2+). Residue D178 is the Proton acceptor; for phosphorylation activity. Proton donor; for dephosphorylation activity of the active site. The interval 202–211 (LEIRGLGIIN) is important for the catalytic mechanism of both phosphorylation and dephosphorylation. E203 lines the Mg(2+) pocket. R244 is a catalytic residue. Residues 265-270 (PVRPGR) form an important for the catalytic mechanism of dephosphorylation region.

The protein belongs to the HPrK/P family. Homohexamer. Mg(2+) is required as a cofactor.

It catalyses the reaction [HPr protein]-L-serine + ATP = [HPr protein]-O-phospho-L-serine + ADP + H(+). The catalysed reaction is [HPr protein]-O-phospho-L-serine + phosphate + H(+) = [HPr protein]-L-serine + diphosphate. In terms of biological role, catalyzes the ATP- as well as the pyrophosphate-dependent phosphorylation of a specific serine residue in HPr, a phosphocarrier protein of the phosphoenolpyruvate-dependent sugar phosphotransferase system (PTS). HprK/P also catalyzes the pyrophosphate-producing, inorganic phosphate-dependent dephosphorylation (phosphorolysis) of seryl-phosphorylated HPr (P-Ser-HPr). The two antagonistic activities of HprK/P are regulated by several intracellular metabolites, which change their concentration in response to the absence or presence of rapidly metabolisable carbon sources (glucose, fructose, etc.) in the growth medium. Therefore, by controlling the phosphorylation state of HPr, HPrK/P is a sensor enzyme that plays a major role in the regulation of carbon metabolism and sugar transport: it mediates carbon catabolite repression (CCR), and regulates PTS-catalyzed carbohydrate uptake and inducer exclusion. This Listeria monocytogenes serotype 4b (strain CLIP80459) protein is HPr kinase/phosphorylase.